The chain runs to 199 residues: Sulfocyanin (199 aa).

Residues 7–27 form a helical; Signal-anchor for type II membrane protein membrane-spanning segment; that stretch reads VLPVVVGILVVIIAVAVGVYV. The Plastocyanin-like domain occupies 79–188; that stretch reads NFNGTSSGSL…SGMWAVLVAS (110 aa). Cu cation is bound by residues His110, Cys171, His176, and Met181.

It belongs to the multicopper oxidase family.

It localises to the cell membrane. The 4 redox proteins SoxE, SoxF, SoxG and SoxH probably form part of a membrane respiratory complex together with SoxM, a catalytic subunit of cytochrome oxidase. In Sulfolobus acidocaldarius (strain ATCC 33909 / DSM 639 / JCM 8929 / NBRC 15157 / NCIMB 11770), this protein is Sulfocyanin (soxE).